The chain runs to 170 residues: Cathelicidin antimicrobial peptide (170 aa).

The signal sequence occupies residues 1 to 30 (MKTQRHGPSLGRWSLVLLLLGLVMPLAIVA). A propeptide spans 31-131 (QVLSYQEAVL…DISCDKDNRR (101 aa)) (cathelin-like domain (CLD)). Cystine bridges form between Cys-86/Cys-97 and Cys-108/Cys-125. Residues 150-162 (LKKIGQKIKDFWG) are active core.

The protein belongs to the cathelicidin family. In terms of assembly, monomer, homodimer or homotrimer (in vitro). Oligomerizes as tetra- or hexamer in solution (in vitro). Proteolytically cleaved by proteinase PRTN3 into antibacterial peptide LL-37. Proteolytically cleaved by cathepsin CTSG and neutrophil elastase ELANE. In terms of processing, resistant to proteolytic degradation in solution, and when bound to both zwitterionic (mimicking mammalian membranes) and negatively charged membranes (mimicking bacterial membranes). Post-translationally, after secretion onto the skin surface, the CAMP gene product is processed by a serine protease-dependent mechanism into multiple novel antimicrobial peptides distinct from and shorter than cathelicidin LL-37. These peptides show enhanced antimicrobial action, acquiring the ability to kill skin pathogens such as S.aureus, E.coli and C.albicans. These peptides have lost the ability to stimulate CXCL8/IL8 release from keratinocytes. The peptides act synergistically, killing bacteria at lower concentrations when present together, and maintain activity at increased salt condition.

It localises to the secreted. Its subcellular location is the vesicle. Its function is as follows. Antimicrobial protein that is an integral component of the innate immune system. Binds to bacterial lipopolysaccharides (LPS). Acts via neutrophil N-formyl peptide receptors to enhance the release of CXCL2. Postsecretory processing generates multiple cathelicidin antimicrobial peptides with various lengths which act as a topical antimicrobial defense in sweat on skin. The unprocessed precursor form, cathelicidin antimicrobial peptide, inhibits the growth of Gram-negative E.coli and E.aerogenes with efficiencies comparable to that of the mature peptide LL-37 (in vitro). Functionally, antimicrobial peptide that is an integral component of the innate immune system. Binds to bacterial lipopolysaccharides (LPS). Causes membrane permeabilization by forming transmembrane pores (in vitro). Causes lysis of E.coli. Exhibits antimicrobial activity against Gram-negative bacteria such as P.aeruginosa, S.typhimurium, E.aerogenes, E.coli and P.syringae, Gram-positive bacteria such as L.monocytogenes, S.epidermidis, S.pyogenes and S.aureus, as well as vancomycin-resistant enterococci (in vitro). Exhibits antimicrobial activity against methicillin-resistant S.aureus, P.mirabilis, and C.albicans in low-salt media, but not in media containing 100 mM NaCl (in vitro). Forms chiral supramolecular assemblies with quinolone signal (PQS) molecules of P.aeruginosa, which may lead to interference of bacterial quorum signaling and perturbance of bacterial biofilm formation. May form supramolecular fiber-like assemblies on bacterial membranes. Induces cytokine and chemokine producation as well as TNF/TNFA and CSF2/GMCSF production in normal human keratinocytes. Exhibits hemolytic activity against red blood cells. Exhibits antimicrobial activity against E.coli and B.megaterium (in vitro). The polypeptide is Cathelicidin antimicrobial peptide (Trachypithecus cristatus (Silvered leaf-monkey)).